Here is a 102-residue protein sequence, read N- to C-terminus: Trp operon repressor homolog (102 aa).

Residues 59–82 (QRQISQMLGVGIATITRGSNELKL) mediate DNA binding.

This sequence belongs to the TrpR family. Homodimer.

The protein localises to the cytoplasm. This protein is an aporepressor. When complexed with L-tryptophan it binds the operator region of the trp operon and prevents the initiation of transcription. This Vibrio vulnificus (strain CMCP6) protein is Trp operon repressor homolog.